A 181-amino-acid chain; its full sequence is Oligoribonuclease (181 aa).

Positions 8–171 (LIWIDLEMTG…QDIQESIAEL (164 aa)) constitute an Exonuclease domain. Y129 is a catalytic residue.

The protein belongs to the oligoribonuclease family.

Its subcellular location is the cytoplasm. In terms of biological role, 3'-to-5' exoribonuclease specific for small oligoribonucleotides. This is Oligoribonuclease from Shewanella oneidensis (strain ATCC 700550 / JCM 31522 / CIP 106686 / LMG 19005 / NCIMB 14063 / MR-1).